A 66-amino-acid chain; its full sequence is Regulator of G-protein signaling 11 (66 aa).

In terms of domain architecture, RGS spans 1-66 (EACEELRFGG…DAAQLHIYML (66 aa)).

Heterodimer with Gbeta5. Interacts with RGS7BP, leading to regulate the subcellular location of the heterodimer formed with Gbeta5.

In terms of biological role, inhibits signal transduction by increasing the GTPase activity of G protein alpha subunits thereby driving them into their inactive GDP-bound form. This chain is Regulator of G-protein signaling 11 (Rgs11), found in Rattus norvegicus (Rat).